Consider the following 148-residue polypeptide: Lysozyme C-3 (148 aa).

An N-terminal signal peptide occupies residues 1-18 (MKTLLVLALLLLSVSVQA). Positions 19 to 148 (KVYDRCEFAR…VSQYIRGCKL (130 aa)) constitute a C-type lysozyme domain. 4 disulfides stabilise this stretch: C24/C146, C48/C134, C83/C99, and C95/C113. Catalysis depends on residues E53 and D71.

Belongs to the glycosyl hydrolase 22 family. As to quaternary structure, monomer.

It is found in the secreted. The catalysed reaction is Hydrolysis of (1-&gt;4)-beta-linkages between N-acetylmuramic acid and N-acetyl-D-glucosamine residues in a peptidoglycan and between N-acetyl-D-glucosamine residues in chitodextrins.. Its function is as follows. Lysozymes have primarily a bacteriolytic function; those in tissues and body fluids are associated with the monocyte-macrophage system and enhance the activity of immunoagents. The sequence is that of Lysozyme C-3 from Sus scrofa (Pig).